Reading from the N-terminus, the 130-residue chain is ATP synthase epsilon chain (130 aa).

Belongs to the ATPase epsilon chain family. F-type ATPases have 2 components, CF(1) - the catalytic core - and CF(0) - the membrane proton channel. CF(1) has five subunits: alpha(3), beta(3), gamma(1), delta(1), epsilon(1). CF(0) has three main subunits: a, b and c.

Its subcellular location is the cell inner membrane. Functionally, produces ATP from ADP in the presence of a proton gradient across the membrane. The sequence is that of ATP synthase epsilon chain from Sulfurimonas denitrificans (strain ATCC 33889 / DSM 1251) (Thiomicrospira denitrificans (strain ATCC 33889 / DSM 1251)).